The chain runs to 642 residues: RNA polymerase sigma factor RpoD (642 aa).

The segment at 199–228 (HLETTAPEKPSNDNSDENEDDEESEEDADE) is disordered. A compositionally biased stretch (acidic residues) spans 212-228 (NSDENEDDEESEEDADE). Positions 403–473 (MIQANLRLVI…TRSIADQART (71 aa)) are sigma-70 factor domain-2. Residues 427–430 (DLIQ) carry the Interaction with polymerase core subunit RpoC motif. The sigma-70 factor domain-3 stretch occupies residues 482 to 558 (ETINKMNRIS…DANNVAPADA (77 aa)). Residues 571–624 (ILESLTPREAKVLRMRFGIDMNTDHTLEEVGRQFDVTRERIRQIEAKALRKLRH) are sigma-70 factor domain-4. Positions 597–616 (LEEVGRQFDVTRERIRQIEA) form a DNA-binding region, H-T-H motif.

This sequence belongs to the sigma-70 factor family. RpoD/SigA subfamily. As to quaternary structure, interacts transiently with the RNA polymerase catalytic core.

The protein resides in the cytoplasm. Sigma factors are initiation factors that promote the attachment of RNA polymerase to specific initiation sites and are then released. This sigma factor is the primary sigma factor during exponential growth. In Neisseria gonorrhoeae, this protein is RNA polymerase sigma factor RpoD.